The following is a 197-amino-acid chain: Probable GTP-binding protein EngB (197 aa).

The 174-residue stretch at 22-195 folds into the EngB-type G domain; the sequence is NLPEIAFVGR…VDYLFDDLVE (174 aa). GTP is bound by residues 30–37, 57–61, 75–78, 142–145, and 174–176; these read GRSNVGKS, GKTRL, DLPG, TKSD, and FSS. Mg(2+) contacts are provided by S37 and T59.

Belongs to the TRAFAC class TrmE-Era-EngA-EngB-Septin-like GTPase superfamily. EngB GTPase family. It depends on Mg(2+) as a cofactor.

Its function is as follows. Necessary for normal cell division and for the maintenance of normal septation. This chain is Probable GTP-binding protein EngB, found in Clostridium perfringens (strain 13 / Type A).